A 330-amino-acid chain; its full sequence is Replication factor C small subunit (330 aa).

48–55 (GPPGTGKT) is an ATP binding site.

The protein belongs to the activator 1 small subunits family. RfcS subfamily. As to quaternary structure, heteropentamer composed of four small subunits (RfcS) and one large subunit (RfcL). A homotetramer of this subunit interacts with PCNA heterodimer PCNA1-PCNA2.

In terms of biological role, part of the RFC clamp loader complex which loads the PCNA sliding clamp onto DNA. The complex possesses DNA-dependent ATPase activity. The sequence is that of Replication factor C small subunit (rfcS) from Saccharolobus solfataricus (strain ATCC 35092 / DSM 1617 / JCM 11322 / P2) (Sulfolobus solfataricus).